We begin with the raw amino-acid sequence, 511 residues long: Dopamine receptor 1 (511 aa).

An N-terminal signal peptide occupies residues 1-19; sequence MYTPHPFGFLIILVPMTNA. The Extracellular segment spans residues 20–142; sequence MRAIAAIAAG…EEPEPLSLVS (123 aa). 5 N-linked (GlcNAc...) asparagine glycosylation sites follow: asparagine 53, asparagine 63, asparagine 74, asparagine 117, and asparagine 123. The chain crosses the membrane as a helical span at residues 143-169; that stretch reads IVVVGIFLSVLIFLSVAGNILVCLAIY. Topologically, residues 170 to 179 are cytoplasmic; it reads TERSLRRIGN. Residues 180 to 206 traverse the membrane as a helical segment; that stretch reads LFLASLAIADLFVASLVMTFAGVNDLL. Topologically, residues 207–216 are extracellular; that stretch reads GYWIFGAQFC. Cysteine 216 and cysteine 302 are joined by a disulfide. Residues 217–239 form a helical membrane-spanning segment; sequence DTWVAFDVMCSTASILNLCAISM. The Cytoplasmic portion of the chain corresponds to 240 to 258; that stretch reads DRYIHIKDPLRYGRWVTRR. The helical transmembrane segment at 259–279 threads the bilayer; it reads VAVITIAAIWLLAAFVSFVPI. Topologically, residues 280–310 are extracellular; the sequence is SLGIHRPDQPLIFEDNGKKYPTCALDLTPTY. A helical membrane pass occupies residues 311-331; it reads AVVSSCISFYFPCVVMIGIYC. Topologically, residues 332-391 are cytoplasmic; that stretch reads RLYCYAQKHVKSIKAVTRPGEVAEKQRYKSIRRPKNQPKKFKVRNLHTHSSPYHVSDHKA. The helical transmembrane segment at 392-412 threads the bilayer; sequence AVTVGVIMGVFLICWVPFFCV. Over 413-427 the chain is Extracellular; the sequence is NITAAFCKTCIGGQT. Residues 428–450 traverse the membrane as a helical segment; sequence FKILTWLGYSNSAFNPIIYSIFN. At 451–511 the chain is on the cytoplasmic side; it reads KEFRDAFKRI…SAELEQVSAI (61 aa). 2 S-palmitoyl cysteine lipidation sites follow: cysteine 468 and cysteine 469.

It belongs to the G-protein coupled receptor 1 family. As to expression, expressed in the larval and adult CNS in structures that mediate higher-order brain functions such as learning, memory and motor control: in the mushroom body neuropil and four unpaired neurons in each thoracic segment. The adult CNS has intense expression in the central complex, moderate expression in several neurosecretory cells, and weak expression in two unpaired neurons in the mesothoracic neuromere. Also seen in the somata of the optic lobes.

It is found in the cell membrane. In terms of biological role, receptor for dopamine. The activity of this receptor is mediated by G proteins which activate adenylyl cyclase. Might be involved in the processing of visual information and/or visual learning. Important for Pavlovian conditioning: required in the mushroom body as a receptor conveying unconditional stimuli information, has a role in memory formation for aversive and appetitive learning. Sleep-deprivation-induced impairments in learning can be partially explained through alterations in dopamine signaling, Dop1R1 expression levels are reduced; sleep may have a role in restoring dopamine homeostasis. This is Dopamine receptor 1 (Dop1R1) from Drosophila melanogaster (Fruit fly).